An 81-amino-acid chain; its full sequence is Consomatin Le1 (81 aa).

Positions 1–22 (MQTAYWVMVMMMVWITAPLSEG) are cleaved as a signal peptide. The propeptide occupies 23–57 (GKPNDVIRGLVPDDLTPQLILRSLISRRRSDKDVR). Position 58 is a 4-carboxyglutamate (glutamate 58). A disulfide bridge connects residues cysteine 62 and cysteine 67. Position 64 is a D-tryptophan (tryptophan 64). At proline 69 the chain carries 4-hydroxyproline. A propeptide spanning residues 71–81 (LWRRHDLKGKD) is cleaved from the precursor.

The protein belongs to the conotoxin C superfamily. Consomatin family. In terms of tissue distribution, expressed by the venom duct.

The protein localises to the secreted. Its function is as follows. Moderately activates human somatostatin receptors (SSTR) with a preferential activation of SSTR1 and SSTR4. In vivo, does not cause behavioral changes in mice within a few minutes of intracranial injection, but causes a progressive loss of movement thereafter. Four to five hours after injection, mice recover, even with the highest dose tested. Shows antinociception and antihyperalgesia activities in two mouse models of acute pain, most probably by acting outside the central nervous system. The sequence is that of Consomatin Le1 from Conus lenavati (Cone snail).